The following is a 127-amino-acid chain: Large ribosomal subunit protein eL24 (127 aa).

Positions 93 to 127 (KRAQKPEVKQAAAEQAKREIKEKKKAAAKKAAPKK) are disordered. Residues 115–127 (KKKAAAKKAAPKK) show a composition bias toward basic residues.

The protein belongs to the eukaryotic ribosomal protein eL24 family.

This Dictyostelium discoideum (Social amoeba) protein is Large ribosomal subunit protein eL24 (rpl24).